Here is a 187-residue protein sequence, read N- to C-terminus: Large ribosomal subunit protein uL10 (187 aa).

It belongs to the universal ribosomal protein uL10 family. Part of the ribosomal stalk of the 50S ribosomal subunit. The N-terminus interacts with L11 and the large rRNA to form the base of the stalk. The C-terminus forms an elongated spine to which L12 dimers bind in a sequential fashion forming a multimeric L10(L12)X complex.

Forms part of the ribosomal stalk, playing a central role in the interaction of the ribosome with GTP-bound translation factors. The chain is Large ribosomal subunit protein uL10 from Roseiflexus castenholzii (strain DSM 13941 / HLO8).